Reading from the N-terminus, the 82-residue chain is uncharacterized protein (82 aa).

3 helical membrane-spanning segments follow: residues 4-26 (IAVLFIVFGFPIVAGVFGIAGHF), 31-50 (FWVAPLIVLITSLILLVTLA), and 55-77 (SFIFWVVMYTAIALVTSVATLFL).

The protein localises to the cell membrane. This is an uncharacterized protein from Bacillus subtilis (strain 168).